Here is a 54-residue protein sequence, read N- to C-terminus: Large ribosomal subunit protein bL33 (54 aa).

The protein belongs to the bacterial ribosomal protein bL33 family.

The sequence is that of Large ribosomal subunit protein bL33 from Rhodopirellula baltica (strain DSM 10527 / NCIMB 13988 / SH1).